We begin with the raw amino-acid sequence, 451 residues long: UPF0210 protein NMC1568 (451 aa).

The protein belongs to the UPF0210 family. Homodimer.

The protein is UPF0210 protein NMC1568 of Neisseria meningitidis serogroup C / serotype 2a (strain ATCC 700532 / DSM 15464 / FAM18).